Consider the following 315-residue polypeptide: Prephenate dehydratase (315 aa).

Residues 3–189 (RIAYLGPEGT…ARTRFLLIGV (187 aa)) form the Prephenate dehydratase domain. The ACT domain maps to 203 to 280 (SAVLRIANVP…ADVRYLGSWP (78 aa)).

In terms of assembly, homodimer.

It catalyses the reaction prephenate + H(+) = 3-phenylpyruvate + CO2 + H2O. Its pathway is amino-acid biosynthesis; L-phenylalanine biosynthesis; phenylpyruvate from prephenate: step 1/1. The polypeptide is Prephenate dehydratase (pheA) (Mycobacterium ulcerans (strain Agy99)).